The sequence spans 212 residues: Probable GTP-binding protein EngB (212 aa).

Positions 23–197 (TGIEVAFAGR…ERILDGWFGL (175 aa)) constitute an EngB-type G domain. GTP is bound by residues 31-38 (GRSNAGKS), 58-62 (GRTQL), 76-79 (DLPG), 143-146 (TKAD), and 176-178 (FSS). Residues serine 38 and threonine 60 each coordinate Mg(2+).

This sequence belongs to the TRAFAC class TrmE-Era-EngA-EngB-Septin-like GTPase superfamily. EngB GTPase family. It depends on Mg(2+) as a cofactor.

Functionally, necessary for normal cell division and for the maintenance of normal septation. The sequence is that of Probable GTP-binding protein EngB from Alteromonas mediterranea (strain DSM 17117 / CIP 110805 / LMG 28347 / Deep ecotype).